The primary structure comprises 430 residues: Asparagine--tRNA ligase (430 aa).

It belongs to the class-II aminoacyl-tRNA synthetase family. Homodimer.

It localises to the cytoplasm. It catalyses the reaction tRNA(Asn) + L-asparagine + ATP = L-asparaginyl-tRNA(Asn) + AMP + diphosphate + H(+). The protein is Asparagine--tRNA ligase of Staphylococcus aureus (strain MRSA252).